Here is a 326-residue protein sequence, read N- to C-terminus: MPWDTRPGRSANGGPEGPGAARLRVQKQCRKSSFAFYLAVRDQLPVWLLEDIRASEAFHCDERGRAAAYSPSEALLYALVHDHQAYAHYLLATFPRCALAPPSAGFRCCTAPGPHVALAVRYNRVGILRRILRTVQDFPVEERVRLLDRRGCSRVEGGGTSLHVACELARPECLFLLLGHGASPGLRDGSGFTPLELLLRQLNQDASSAPTKAEAASATVNAATANTTSSEEVCQRRLLLLDLLVLYTPGGVVGPARCELLGDQLRWQRLLGEDKFQWLAGLAPPSLFVRAMQVLVTTISPGRFPEALDELPLPSFLQPLDLTGKG.

Positions 1–20 are disordered; it reads MPWDTRPGRSANGGPEGPGA. An ANK 1 repeat occupies 70–99; sequence SPSEALLYALVHDHQAYAHYLLATFPRCAL. Residues 108–109 carry the Important role in both nutrient sensing and binding/regulation of IMPDH2 motif; it reads CC. 2 ANK repeats span residues 111–140 and 157–186; these read APGPHVALAVRYNRVGILRRILRTVQDFPV and GGGTSLHVACELARPECLFLLLGHGASPGL.

Part of an E3 ubiquitin-protein ligase complex with Elongin BC (ELOB and ELOC), CUL5 and ANKRD9. Interacts with IMPDH2; leading to ubiquitination of IMPDH2 and its subsequent proteasomal degradation.

It localises to the cytoplasmic vesicle. The protein resides in the cytoplasm. Its subcellular location is the cytosol. It participates in protein modification; protein ubiquitination. Its function is as follows. Substrate receptor subunit of a cullin-RING superfamily E3 ligase complex (CUL5-based E3 ubiquitin ligase complex) which mediates the ubiquitination and subsequent proteasomal degradation of target proteins. Depending of the metabolic state of the cell, promotes the proteasomal degradation of IMPDH2, the rate-limiting enzyme in GTP biosynthesis or protects IMPDH2 by stabilizing IMPDH2 filaments assembly. Implicated in different cellular processes, like copper homeostasis and cell proliferation. In Mus musculus (Mouse), this protein is Ankyrin repeat domain-containing protein 9 (Ankrd9).